The following is a 1910-amino-acid chain: C2 domain-containing protein (1910 aa).

Positions 1 to 28 (MMKLKEMVEAAEAKVESKPPQAAEEKAP) are enriched in basic and acidic residues. Disordered regions lie at residues 1–54 (MMKL…EPLD), 355–377 (AMKL…PEDG), and 398–428 (LEEL…DGPQ). Basic and acidic residues predominate over residues 414 to 423 (KGEDKKDGNK). Residues 557–678 (QLGEVSESDS…FFNEKHNKRN (122 aa)) form the C2 domain. 2 stretches are compositionally biased toward basic and acidic residues: residues 1192-1205 (LAQK…DAQR) and 1215-1228 (GHEG…DKQG). Disordered stretches follow at residues 1192 to 1267 (LAQK…VKKG), 1405 to 1424 (ATAG…RDMQ), 1431 to 1654 (LEEA…SMGA), 1666 to 1747 (QRKH…FLSS), 1822 to 1841 (AKEE…DWSD), and 1879 to 1910 (DACS…AGRT). Composition is skewed to low complexity over residues 1239 to 1257 (AAAA…VQGA) and 1405 to 1414 (ATAGEGEQQT). Positions 1440–1469 (KKKKKKEKKEKKEKKEKKEKKEKKEKKKKK) are enriched in basic residues. A compositionally biased stretch (low complexity) spans 1492–1502 (PAAAIPSVLLP). The segment covering 1517 to 1526 (KKEKKEKKKK) has biased composition (basic residues). Residues 1550 to 1561 (PAAAIPSILLPA) are compositionally biased toward low complexity. Residues 1569-1584 (EKPKEKKTEKKKEKHT) are compositionally biased toward basic and acidic residues. A compositionally biased stretch (polar residues) spans 1595–1604 (LPESETTAVV). Composition is skewed to low complexity over residues 1620–1629 (VPSSIASSEA) and 1675–1698 (SSSS…SSSS). Residues 1701-1711 (AETRAKADALR) show a composition bias toward basic and acidic residues. 2 stretches are compositionally biased toward low complexity: residues 1712 to 1722 (ARLQAAQARLA) and 1729 to 1747 (VSSS…FLSS). Positions 1766-1828 (QQRLQKMVSG…TRRAKEEKDL (63 aa)) form a coiled coil. Over residues 1890–1904 (ESRTTAGAKLRQQQL) the composition is skewed to polar residues.

It is found in the membrane. In terms of biological role, regulates microneme secretion. Probably involved in regulation of rhoptry and dense granule secretion. In Toxoplasma gondii, this protein is C2 domain-containing protein.